The chain runs to 283 residues: Probable protein phosphatase 2C 17 (283 aa).

Residues 32 to 282 enclose the PPM-type phosphatase domain; it reads KYGFSLIKGK…DDISCIVVRF (251 aa). Mn(2+) contacts are provided by Asp69, Gly70, Asp234, and Asp273.

Belongs to the PP2C family. Mg(2+) is required as a cofactor. Requires Mn(2+) as cofactor.

It carries out the reaction O-phospho-L-seryl-[protein] + H2O = L-seryl-[protein] + phosphate. It catalyses the reaction O-phospho-L-threonyl-[protein] + H2O = L-threonyl-[protein] + phosphate. The protein is Probable protein phosphatase 2C 17 of Arabidopsis thaliana (Mouse-ear cress).